The sequence spans 250 residues: Small ribosomal subunit protein uS3 (250 aa).

In terms of domain architecture, KH type-2 spans 16–85; it reads IDEYLEKELE…NPQIEVKEVS (70 aa).

The protein belongs to the universal ribosomal protein uS3 family. As to quaternary structure, part of the 30S ribosomal subunit.

Binds the lower part of the 30S subunit head. The sequence is that of Small ribosomal subunit protein uS3 from Methanobrevibacter smithii (strain ATCC 35061 / DSM 861 / OCM 144 / PS).